A 127-amino-acid polypeptide reads, in one-letter code: Snaclec CHH-B subunit alpha (127 aa).

3 disulfides stabilise this stretch: Cys4–Cys15, Cys32–Cys120, and Cys95–Cys112. Positions 11–121 (YDRYCYKPFK…CEQQHSFICK (111 aa)) constitute a C-type lectin domain.

It belongs to the snaclec family. As to quaternary structure, heterodimer of subunits alpha and beta; disulfide-linked. In terms of tissue distribution, expressed by the venom gland.

The protein resides in the secreted. Binds to the subunit GPIbalpha (GP1BA) of the platelet GPIb/V/IX receptor system. It inhibits ristocetin- and vWF-induced platelet aggregation in platelet-rich plasma by inhibiting the binding of vWF to GPIbalpha. The polypeptide is Snaclec CHH-B subunit alpha (Crotalus horridus (Timber rattlesnake)).